Here is a 198-residue protein sequence, read N- to C-terminus: tRNA (pseudouridine(54)-N(1))-methyltransferase (198 aa).

S-adenosyl-L-methionine is bound by residues leucine 130, glycine 153, leucine 176–leucine 181, and cysteine 186.

Belongs to the methyltransferase superfamily. TrmY family. As to quaternary structure, homodimer.

Its subcellular location is the cytoplasm. The enzyme catalyses pseudouridine(54) in tRNA + S-adenosyl-L-methionine = N(1)-methylpseudouridine(54) in tRNA + S-adenosyl-L-homocysteine + H(+). In terms of biological role, specifically catalyzes the N1-methylation of pseudouridine at position 54 (Psi54) in tRNAs. The sequence is that of tRNA (pseudouridine(54)-N(1))-methyltransferase from Methanococcus maripaludis (strain C5 / ATCC BAA-1333).